A 559-amino-acid polypeptide reads, in one-letter code: CTP synthase (559 aa).

Residues 1–270 are amidoligase domain; sequence MTKFVFVTGG…DGLICDKLRL (270 aa). S13 is a CTP binding site. S13 contributes to the UTP binding site. Residues 14–19 and D71 contribute to the ATP site; that span reads SLGKGI. Positions 71 and 144 each coordinate Mg(2+). Residues 151 to 153, 191 to 196, and K227 each bind CTP; these read DIE and KTKPTQ. UTP is bound by residues 191 to 196 and K227; that span reads KTKPTQ. Positions 295–548 constitute a Glutamine amidotransferase type-1 domain; sequence TIAMVGKYVD…IKAAIDHQKS (254 aa). G357 provides a ligand contact to L-glutamine. C384 serves as the catalytic Nucleophile; for glutamine hydrolysis. L-glutamine-binding positions include 385–388, E408, and R474; that span reads LGMQ. Active-site residues include H521 and E523.

This sequence belongs to the CTP synthase family. As to quaternary structure, homotetramer.

The catalysed reaction is UTP + L-glutamine + ATP + H2O = CTP + L-glutamate + ADP + phosphate + 2 H(+). It catalyses the reaction L-glutamine + H2O = L-glutamate + NH4(+). It carries out the reaction UTP + NH4(+) + ATP = CTP + ADP + phosphate + 2 H(+). The protein operates within pyrimidine metabolism; CTP biosynthesis via de novo pathway; CTP from UDP: step 2/2. Allosterically activated by GTP, when glutamine is the substrate; GTP has no effect on the reaction when ammonia is the substrate. The allosteric effector GTP functions by stabilizing the protein conformation that binds the tetrahedral intermediate(s) formed during glutamine hydrolysis. Inhibited by the product CTP, via allosteric rather than competitive inhibition. Its function is as follows. Catalyzes the ATP-dependent amination of UTP to CTP with either L-glutamine or ammonia as the source of nitrogen. Regulates intracellular CTP levels through interactions with the four ribonucleotide triphosphates. The sequence is that of CTP synthase from Paracidovorax citrulli (strain AAC00-1) (Acidovorax citrulli).